We begin with the raw amino-acid sequence, 195 residues long: Imidazoleglycerol-phosphate dehydratase (195 aa).

It belongs to the imidazoleglycerol-phosphate dehydratase family.

The protein localises to the cytoplasm. It catalyses the reaction D-erythro-1-(imidazol-4-yl)glycerol 3-phosphate = 3-(imidazol-4-yl)-2-oxopropyl phosphate + H2O. It participates in amino-acid biosynthesis; L-histidine biosynthesis; L-histidine from 5-phospho-alpha-D-ribose 1-diphosphate: step 6/9. The sequence is that of Imidazoleglycerol-phosphate dehydratase from Burkholderia multivorans (strain ATCC 17616 / 249).